The chain runs to 391 residues: Chalcone synthase (391 aa).

Residue cysteine 164 is part of the active site.

This sequence belongs to the thiolase-like superfamily. Chalcone/stilbene synthases family.

It carries out the reaction (E)-4-coumaroyl-CoA + 3 malonyl-CoA + 3 H(+) = 2',4,4',6'-tetrahydroxychalcone + 3 CO2 + 4 CoA. Its pathway is secondary metabolite biosynthesis; flavonoid biosynthesis. In terms of biological role, the primary product of this enzyme is 4,2',4',6'-tetrahydroxychalcone (also termed naringenin-chalcone or chalcone) which can under specific conditions spontaneously isomerize into naringenin. The chain is Chalcone synthase (CHS) from Dianthus monspessulanus.